Here is a 239-residue protein sequence, read N- to C-terminus: dITP/XTP pyrophosphatase (239 aa).

A substrate-binding site is contributed by 7-12; sequence THNEGK. The Proton acceptor role is filled by D74. A Mg(2+)-binding site is contributed by D74. Residues S75, 182–185, K214, and 219–220 contribute to the substrate site; these read FGYD and HR.

The protein belongs to the HAM1 NTPase family. In terms of assembly, homodimer. Mg(2+) serves as cofactor.

It catalyses the reaction XTP + H2O = XMP + diphosphate + H(+). The catalysed reaction is dITP + H2O = dIMP + diphosphate + H(+). It carries out the reaction ITP + H2O = IMP + diphosphate + H(+). Functionally, pyrophosphatase that catalyzes the hydrolysis of nucleoside triphosphates to their monophosphate derivatives, with a high preference for the non-canonical purine nucleotides XTP (xanthosine triphosphate), dITP (deoxyinosine triphosphate) and ITP. Seems to function as a house-cleaning enzyme that removes non-canonical purine nucleotides from the nucleotide pool, thus preventing their incorporation into DNA/RNA and avoiding chromosomal lesions. This Bifidobacterium animalis subsp. lactis (strain AD011) protein is dITP/XTP pyrophosphatase.